The primary structure comprises 576 residues: Deformed epidermal autoregulatory factor 1 (576 aa).

Disordered stretches follow at residues 52-76 (VTSSSNDNSGSGGASGGTSGAGGGN), 189-215 (AGGASGVGGGGGGTGGGSSGWSENPST), and 309-362 (ESAS…SGSG). Composition is skewed to gly residues over residues 61–76 (GSGGASGGTSGAGGGN) and 191–207 (GASGVGGGGGGTGGGSS). The SAND domain occupies 210–291 (SENPSTQHNE…QSLIDEGTLT (82 aa)). Positions 324 to 340 (RKRNQTDLDMESGPKRK) match the Nuclear localization signal motif. The segment covering 345 to 362 (HSNNNNSNTNNNNTSGSG) has biased composition (low complexity). Cys521, Cys524, Cys532, Cys535, Cys541, Cys545, His553, and Cys557 together coordinate Zn(2+). The MYND-type zinc-finger motif lies at 521–557 (CANCNREALAECSLCRKTPYCSEFCQRKDWNAHQVEC).

The protein resides in the nucleus. In terms of biological role, transcription factor that binds the homeotic Deformed (Dfd) response element. High affinity binding sites contain at least 1 TTCG motif surrounded by additional TCG sequences. May be involved in the selective action of Dfd on these sites without binding directly to the Dfd protein. Requirement of DEAF1 activity may be a common feature of enhancers targeted by Dfd. The polypeptide is Deformed epidermal autoregulatory factor 1 (Deaf1) (Drosophila melanogaster (Fruit fly)).